The sequence spans 495 residues: MVTATPVKTEYEAIIGLETHCQLNTHSKIFCNCSTKFDSPPNTNVCPICLGYPGVLPVLNLEVLASAVKMGLAINGKIASYSKFDRKQYFYPDLPKNYQISQYDLPIVEQGSLEIEVVDKETKEVTRKTIGITRLHMEEDAGKLVHAGSDRLAGSTYSLVDFNRTGVPLLEIVSEPDLRSGQEAAEYAQELRRLVRYLGISDGNMQEGSLRCDVNISVRPKGQKKFGTKVEIKNMNSFSAIQKAIEYEIERQIEAIENGEPIRLETRLWEEGKQRTVTMRLKEGASDYRYFPEPDLPPIEVSQEQIETWKAQIPELPAQKRTRYETELGLSAYDARVLTDEREVAEYFETAVATGANAKLVANWVTQDIAAYLNNNKLNIGEIALKSEGLGELVNLIEEGTISGKIAKDILPELLTDGGSPKTLVEKKGLIQISDTGELEKIIDEVIASHPKELEKYRSGKKNLKGFFVGQVLKKTGGRADPKLTNQLLDKKLEA.

Belongs to the GatB/GatE family. GatB subfamily. In terms of assembly, heterotrimer of A, B and C subunits.

The enzyme catalyses L-glutamyl-tRNA(Gln) + L-glutamine + ATP + H2O = L-glutaminyl-tRNA(Gln) + L-glutamate + ADP + phosphate + H(+). It carries out the reaction L-aspartyl-tRNA(Asn) + L-glutamine + ATP + H2O = L-asparaginyl-tRNA(Asn) + L-glutamate + ADP + phosphate + 2 H(+). Its function is as follows. Allows the formation of correctly charged Asn-tRNA(Asn) or Gln-tRNA(Gln) through the transamidation of misacylated Asp-tRNA(Asn) or Glu-tRNA(Gln) in organisms which lack either or both of asparaginyl-tRNA or glutaminyl-tRNA synthetases. The reaction takes place in the presence of glutamine and ATP through an activated phospho-Asp-tRNA(Asn) or phospho-Glu-tRNA(Gln). This is Aspartyl/glutamyl-tRNA(Asn/Gln) amidotransferase subunit B from Gloeothece citriformis (strain PCC 7424) (Cyanothece sp. (strain PCC 7424)).